We begin with the raw amino-acid sequence, 401 residues long: Transcription factor atf-2 (401 aa).

Over residues 19–38 (SASAEFSSSSSDSSNFSEGS) the composition is skewed to low complexity. The tract at residues 19 to 78 (SASAEFSSSSSDSSNFSEGSPPESRRNSVNESVIKDEHYWERRRRNNDASRRSREKRRQN) is disordered. The span at 41–78 (ESRRNSVNESVIKDEHYWERRRRNNDASRRSREKRRQN) shows a compositional bias: basic and acidic residues. Residues 54–100 (DEHYWERRRRNNDASRRSREKRRQNDLAMEEKIMLLSAENERLKSQL) enclose the bZIP 1 domain. Positions 60–85 (RRRRNNDASRRSREKRRQNDLAMEEK) are basic motif 1. The leucine-zipper 1 stretch occupies residues 89–96 (LSAENERL). The span at 181-211 (SASSLFSSSSSSAFHPFRPSESAQQSFPSSS) shows a compositional bias: low complexity. Disordered regions lie at residues 181-256 (SASS…PQPV) and 273-345 (QRRP…AAKR). 2 stretches are compositionally biased toward polar residues: residues 222–256 (DSST…PQPV) and 273–283 (QRRPSPTVPQS). The segment covering 305 to 317 (ESVSSSASFSPSH) has biased composition (low complexity). The bZIP 2 domain occupies 329–392 (SPQYVDRRRR…AHFKSVLAQR (64 aa)). A basic motif 2 region spans residues 335 to 360 (RRRRNNEAAKRCRANRRAVFEYRSRR). Residues 361–388 (VQLLEGENEDLRTQIETLKAEIAHFKSV) are a coiled coil. The segment at 364–378 (LEGENEDLRTQIETL) is leucine-zipper 2.

It belongs to the bZIP family. Interacts with cell death specification protein ces-2. Phosphorylated by mitogen-activated protein kinases pmk-2 and pmk-3. May be responsive to osmotic stress.

The protein localises to the nucleus. Functionally, acts as a transcription factor that recognizes and binds to the sequence 5'-[GA]TTA[CT]GTAA[CT]-3', a sequence present in many promoters. Involved in the development of the excretory duct cell, by positively modulating embryonic transcription of putative transcription factor lin-48, acting in concert with cell death specification protein ces-2. Negatively modulates expression of key autophagy-related genes, bec-1/ATG6 and lgg-1/ATG8, and may link together autophagy and apoptosis during development. Positively modulates expression of neuropeptide pigment dispersing factor homologs pdf-1 and pdf-2. The chain is Transcription factor atf-2 from Caenorhabditis elegans.